Here is a 174-residue protein sequence, read N- to C-terminus: QQIGSEDGEPPQQRVTGTLVLAVFSAVLGSLQFGYNIGVINAPQKVIEQSYNETWLGRQGPNGPGSIPPGTLTTLWALSVAIFSVGGMFSSFLLGIISQWLGRKKAMLFNNTLAVLAGALMGLAKAAASYEMLILGRFLIGAYSGLASGLVPMYVGEIAPTHLRGALGTLNQLA.

The Cytoplasmic segment spans residues 1–19; that stretch reads QQIGSEDGEPPQQRVTGTL. Residues 2–8 are interaction with SRFBP1; it reads QIGSEDG. Ser-5 is modified (phosphoserine). The helical transmembrane segment at 20 to 40 threads the bilayer; it reads VLAVFSAVLGSLQFGYNIGVI. The Extracellular segment spans residues 41 to 76; it reads NAPQKVIEQSYNETWLGRQGPNGPGSIPPGTLTTLW. N-linked (GlcNAc...) asparagine glycosylation is present at Asn-52. Residues 77-97 traverse the membrane as a helical segment; the sequence is ALSVAIFSVGGMFSSFLLGII. Residues 98 to 114 lie on the Cytoplasmic side of the membrane; sequence SQWLGRKKAMLFNNTLA. The helical transmembrane segment at 115–135 threads the bilayer; it reads VLAGALMGLAKAAASYEMLIL. Topologically, residues 136 to 137 are extracellular; that stretch reads GR. A helical transmembrane segment spans residues 138–158; that stretch reads FLIGAYSGLASGLVPMYVGEI. The Cytoplasmic portion of the chain corresponds to 159-166; that stretch reads APTHLRGA. Residues 167-174 form a helical membrane-spanning segment; it reads LGTLNQLA.

Belongs to the major facilitator superfamily. Sugar transporter (TC 2.A.1.1) family. Glucose transporter subfamily. Binds to DAXX. Interacts via its N-terminus with SRFBP1. Interacts with NDUFA9. Interacts with TRARG1; the interaction is required for proper SLC2A4 recycling after insulin stimulation. In terms of processing, sumoylated. Post-translationally, palmitoylated. Palmitoylation by ZDHHC7 controls the insulin-dependent translocation of GLUT4 to the plasma membrane.

It is found in the cell membrane. Its subcellular location is the endomembrane system. The protein localises to the cytoplasm. It localises to the perinuclear region. It carries out the reaction D-glucose(out) = D-glucose(in). In terms of biological role, insulin-regulated facilitative glucose transporter, which plays a key role in removal of glucose from circulation. Response to insulin is regulated by its intracellular localization: in the absence of insulin, it is efficiently retained intracellularly within storage compartments in muscle and fat cells. Upon insulin stimulation, translocates from these compartments to the cell surface where it transports glucose from the extracellular milieu into the cell. This is Solute carrier family 2, facilitated glucose transporter member 4 from Sus scrofa (Pig).